Consider the following 219-residue polypeptide: uncharacterized protein (219 aa).

The next 5 helical transmembrane spans lie at 14–34, 37–57, 123–143, 155–175, and 189–209; these read LVYS…FGVL, TLGF…AGAS, FLLG…ALGV, VYSA…LPNL, and VALA…AALA.

This sequence belongs to the AzlC family.

The protein localises to the cell membrane. This is an uncharacterized protein from Archaeoglobus fulgidus (strain ATCC 49558 / DSM 4304 / JCM 9628 / NBRC 100126 / VC-16).